The primary structure comprises 472 residues: Trigger factor (472 aa).

The 88-residue stretch at 174 to 261 folds into the PPIase FKBP-type domain; it reads GDIAVLGFKG…LKDLKTRELP (88 aa). The disordered stretch occupies residues 430 to 472; it reads ENSTLTEQAPAADDADDAEKPAAKKKPAAKKKTPAKSKTDAEA. The segment covering 452 to 464 has biased composition (basic residues); the sequence is AKKKPAAKKKTPA.

The protein belongs to the FKBP-type PPIase family. Tig subfamily.

It localises to the cytoplasm. It catalyses the reaction [protein]-peptidylproline (omega=180) = [protein]-peptidylproline (omega=0). Involved in protein export. Acts as a chaperone by maintaining the newly synthesized protein in an open conformation. Functions as a peptidyl-prolyl cis-trans isomerase. This Parasynechococcus marenigrum (strain WH8102) protein is Trigger factor.